The sequence spans 391 residues: Large ribosomal subunit protein uL3 (391 aa).

A compositionally biased stretch (basic and acidic residues) spans 1-10; that stretch reads MSHRKFEAPR. Residues 1–41 are disordered; it reads MSHRKFEAPRHGSLGFRPRRRTRHHRGRCRSFPKDDPSKKP. Residues 17-31 show a composition bias toward basic residues; it reads RPRRRTRHHRGRCRS.

The protein belongs to the universal ribosomal protein uL3 family.

The protein localises to the cytoplasm. Its function is as follows. The L3 protein is a component of the large subunit of cytoplasmic ribosomes. The polypeptide is Large ribosomal subunit protein uL3 (RPL3) (Tetrahymena thermophila).